The following is a 158-amino-acid chain: Small ribosomal subunit protein uS17 (158 aa).

A2 is modified (N-acetylalanine). At R22 the chain carries Citrulline. K38, K45, and K58 each carry N6-acetyllysine. A lipid anchor (S-palmitoyl cysteine) is attached at C60. Position 67 is a phosphoserine (S67). R69 carries the post-translational modification Omega-N-methylarginine. Residue S110 is modified to Phosphoserine.

Belongs to the universal ribosomal protein uS17 family. As to quaternary structure, component of the small ribosomal subunit. Part of the small subunit (SSU) processome, composed of more than 70 proteins and the RNA chaperone small nucleolar RNA (snoRNA) U3. Post-translationally, citrullinated by PADI4.

It is found in the cytoplasm. The protein resides in the nucleus. Its subcellular location is the nucleolus. In terms of biological role, component of the small ribosomal subunit. The ribosome is a large ribonucleoprotein complex responsible for the synthesis of proteins in the cell. Part of the small subunit (SSU) processome, first precursor of the small eukaryotic ribosomal subunit. During the assembly of the SSU processome in the nucleolus, many ribosome biogenesis factors, an RNA chaperone and ribosomal proteins associate with the nascent pre-rRNA and work in concert to generate RNA folding, modifications, rearrangements and cleavage as well as targeted degradation of pre-ribosomal RNA by the RNA exosome. This Mus musculus (Mouse) protein is Small ribosomal subunit protein uS17 (Rps11).